The following is a 29-amino-acid chain: Potassium channel toxin alpha-KTx 8.4 (29 aa).

3 disulfides stabilise this stretch: C3–C19, C6–C24, and C10–C26.

The protein belongs to the short scorpion toxin superfamily. Potassium channel inhibitor family. Alpha-KTx 08 subfamily. Expressed by the venom gland.

It is found in the secreted. Its function is as follows. Inhibits voltage-gated potassium channels. This Leiurus hebraeus (Hebrew deathstalker scorpion) protein is Potassium channel toxin alpha-KTx 8.4.